Consider the following 303-residue polypeptide: N-acetyl-D-glucosamine kinase (303 aa).

Residues 4 to 11 (GFDIGGTK) and 133 to 140 (GVGGGLVL) contribute to the ATP site. Residues His157, Cys177, Cys179, and Cys184 each coordinate Zn(2+).

The protein belongs to the ROK (NagC/XylR) family. NagK subfamily.

It carries out the reaction N-acetyl-D-glucosamine + ATP = N-acetyl-D-glucosamine 6-phosphate + ADP + H(+). It participates in cell wall biogenesis; peptidoglycan recycling. In terms of biological role, catalyzes the phosphorylation of N-acetyl-D-glucosamine (GlcNAc) derived from cell-wall degradation, yielding GlcNAc-6-P. The polypeptide is N-acetyl-D-glucosamine kinase (Salmonella agona (strain SL483)).